The sequence spans 209 residues: Ephrin-A2 (209 aa).

The N-terminal stretch at 1 to 20 (MAPAQRPLLPLLLLLLPLRA) is a signal peptide. The Ephrin RBD domain maps to 30–170 (ADRYAVYWNR…RLKVYVRPTN (141 aa)). N-linked (GlcNAc...) asparagine glycosylation occurs at asparagine 38. Cystine bridges form between cysteine 69/cysteine 110 and cysteine 98/cysteine 159. 2 N-linked (GlcNAc...) asparagine glycosylation sites follow: asparagine 170 and asparagine 184. Asparagine 184 is lipidated: GPI-anchor amidated asparagine. Residues 185–209 (SSCSGLGGCHLFLTTVPVLWSLLGS) constitute a propeptide, removed in mature form.

The protein belongs to the ephrin family. In terms of assembly, binds to the receptor tyrosine kinases EPHA3, EPHA4 and EPHA5. Interacts with EPHA8; activates EPHA8. Expressed in myogenic progenitor cells.

It localises to the cell membrane. In terms of biological role, cell surface GPI-bound ligand for Eph receptors, a family of receptor tyrosine kinases which are crucial for migration, repulsion and adhesion during neuronal, vascular and epithelial development. Binds promiscuously Eph receptors residing on adjacent cells, leading to contact-dependent bidirectional signaling into neighboring cells. The signaling pathway downstream of the receptor is referred to as forward signaling while the signaling pathway downstream of the ephrin ligand is referred to as reverse signaling. With the EPHA2 receptor may play a role in bone remodeling through regulation of osteoclastogenesis and osteoblastogenesis. The protein is Ephrin-A2 (Efna2) of Mus musculus (Mouse).